A 252-amino-acid chain; its full sequence is Proteasome subunit alpha 1 (252 aa).

Residue M1 is modified to N-acetylmethionine; alternate.

This sequence belongs to the peptidase T1A family. The 20S proteasome core is composed of 14 alpha and 14 beta subunits that assemble into four stacked heptameric rings, resulting in a barrel-shaped structure. The two inner rings, each composed of seven catalytic beta subunits, are sandwiched by two outer rings, each composed of seven alpha subunits. H.volcanii produces at least 2 types of 20S proteasomes: an alpha1-beta proteasome and a proteasome containing all three subunits (alpha1, alpha2, and beta) that appears to be asymmetrical with homo-oligomeric alpha1 and alpha2 rings positioned on separate ends. The catalytic chamber with the active sites is on the inside of the barrel. Has probably a gated structure, the ends of the cylinder being occluded by the N-termini of the alpha-subunits. Is likely capped at one or both ends by the proteasome regulatory ATPase, PAN. Post-translationally, acetylated. The acetylated form at Met-1 was shown to be in 100-fold excess of the unacetylated form with the initiator methionine removed in whole cells and purified 20S proteasomes.

The protein localises to the cytoplasm. The formation of the proteasomal ATPase PAN-20S proteasome complex, via the docking of the C-termini of PAN into the intersubunit pockets in the alpha-rings, triggers opening of the gate for substrate entry. Interconversion between the open-gate and close-gate conformations leads to a dynamic regulation of the 20S proteasome proteolysis activity. In vitro, the chymotrypsin-like activity of the alpha1-beta proteasome is potently inhibited by carbobenzoxyl-leucinyl-leucinyl-leucinal-H (MG132) and significantly by N-acetyl-leucinyl-leucinyl-norleucinal-H (calpain inhibitor I). In terms of biological role, component of the proteasome core, a large protease complex with broad specificity involved in protein degradation. The H.volcanii alpha1-beta proteasome is able to cleave oligopeptides after Phe, Tyr and Trp, poorly after Glu but not after Arg. Thus, displays chymotrypsin-like activity, low caspase-like activity but no trypsin-like activity. The sequence is that of Proteasome subunit alpha 1 from Haloferax volcanii (strain ATCC 29605 / DSM 3757 / JCM 8879 / NBRC 14742 / NCIMB 2012 / VKM B-1768 / DS2) (Halobacterium volcanii).